Consider the following 138-residue polypeptide: Basic phospholipase A2 Pla2Vb (138 aa).

Positions 1 to 16 are cleaved as a signal peptide; sequence MRTLWIVAVWLMGVEG. 7 cysteine pairs are disulfide-bonded: C42–C131, C44–C60, C59–C111, C65–C138, C66–C104, C73–C97, and C91–C102. Residues Y43, G45, and G47 each contribute to the Ca(2+) site. H63 is a catalytic residue. D64 serves as a coordination point for Ca(2+). The active site involves D105.

This sequence belongs to the phospholipase A2 family. Group II subfamily. D49 sub-subfamily. The cofactor is Ca(2+). As to expression, expressed by the venom gland.

It is found in the secreted. The enzyme catalyses a 1,2-diacyl-sn-glycero-3-phosphocholine + H2O = a 1-acyl-sn-glycero-3-phosphocholine + a fatty acid + H(+). Functionally, snake venom phospholipase A2 (PLA2) that exhibits medium anticoagulant effects by binding to factor Xa (F10) and inhibiting the prothrombinase activity (IC(50) is 90 nM). PLA2 catalyzes the calcium-dependent hydrolysis of the 2-acyl groups in 3-sn-phosphoglycerides. This chain is Basic phospholipase A2 Pla2Vb, found in Vipera berus berus (Common viper).